Here is a 198-residue protein sequence, read N- to C-terminus: ATP-dependent Clp protease proteolytic subunit (198 aa).

Ser98 functions as the Nucleophile in the catalytic mechanism. His123 is an active-site residue.

This sequence belongs to the peptidase S14 family. As to quaternary structure, fourteen ClpP subunits assemble into 2 heptameric rings which stack back to back to give a disk-like structure with a central cavity, resembling the structure of eukaryotic proteasomes.

It is found in the cytoplasm. It carries out the reaction Hydrolysis of proteins to small peptides in the presence of ATP and magnesium. alpha-casein is the usual test substrate. In the absence of ATP, only oligopeptides shorter than five residues are hydrolyzed (such as succinyl-Leu-Tyr-|-NHMec, and Leu-Tyr-Leu-|-Tyr-Trp, in which cleavage of the -Tyr-|-Leu- and -Tyr-|-Trp bonds also occurs).. In terms of biological role, cleaves peptides in various proteins in a process that requires ATP hydrolysis. Has a chymotrypsin-like activity. Plays a major role in the degradation of misfolded proteins. The polypeptide is ATP-dependent Clp protease proteolytic subunit (Listeria monocytogenes serovar 1/2a (strain ATCC BAA-679 / EGD-e)).